A 155-amino-acid chain; its full sequence is SsrA-binding protein (155 aa).

The protein belongs to the SmpB family.

It is found in the cytoplasm. In terms of biological role, required for rescue of stalled ribosomes mediated by trans-translation. Binds to transfer-messenger RNA (tmRNA), required for stable association of tmRNA with ribosomes. tmRNA and SmpB together mimic tRNA shape, replacing the anticodon stem-loop with SmpB. tmRNA is encoded by the ssrA gene; the 2 termini fold to resemble tRNA(Ala) and it encodes a 'tag peptide', a short internal open reading frame. During trans-translation Ala-aminoacylated tmRNA acts like a tRNA, entering the A-site of stalled ribosomes, displacing the stalled mRNA. The ribosome then switches to translate the ORF on the tmRNA; the nascent peptide is terminated with the 'tag peptide' encoded by the tmRNA and targeted for degradation. The ribosome is freed to recommence translation, which seems to be the essential function of trans-translation. In Lawsonia intracellularis (strain PHE/MN1-00), this protein is SsrA-binding protein.